Here is a 275-residue protein sequence, read N- to C-terminus: MKIANFEVGNGKPFFLMSGPCVIESEQMAMDTAGYLAEVTKDLGINFVYKSSFDKANRSSINSFRGLGVDKGLEILAKVKKTYNVPVVTDVHEDTPFAEVAEVVDVLQTPAFLCRQTNFILEVCKQGKPVNIKKGQFLAPWDMQHVVTKAKSTGNEQIMVCERGVSFGYNNLVSDMRSLEIMKATGCPVVFDATHSVQLPGGQGSSSGGQREFVPVLSKAAMAVGIDGLFMETHPNPDEAKSDGLNSFPMYKIKEFLSLLKELDHLVKSQPKTEL.

Belongs to the KdsA family.

Its subcellular location is the cytoplasm. It catalyses the reaction D-arabinose 5-phosphate + phosphoenolpyruvate + H2O = 3-deoxy-alpha-D-manno-2-octulosonate-8-phosphate + phosphate. The protein operates within carbohydrate biosynthesis; 3-deoxy-D-manno-octulosonate biosynthesis; 3-deoxy-D-manno-octulosonate from D-ribulose 5-phosphate: step 2/3. It participates in bacterial outer membrane biogenesis; lipopolysaccharide biosynthesis. This is 2-dehydro-3-deoxyphosphooctonate aldolase from Francisella tularensis subsp. mediasiatica (strain FSC147).